The sequence spans 67 residues: Large ribosomal subunit protein uL29 (67 aa).

This sequence belongs to the universal ribosomal protein uL29 family.

This Halalkalibacterium halodurans (strain ATCC BAA-125 / DSM 18197 / FERM 7344 / JCM 9153 / C-125) (Bacillus halodurans) protein is Large ribosomal subunit protein uL29 (rpmC).